A 151-amino-acid polypeptide reads, in one-letter code: MSTLPSGSVSWYKIFQRGQNYMKAWPAEKSLAPMFPEHRVVRATRFGVRFMPAVAVFTLTWQIALGGQLGPAVATAIFACSLPMQGLWWLGKRSITPLPPSLLTCFHEVRQKLNEAGQSLAPVEGVPTYQMLVEVLKRAFKLLDKAFLDDL.

The next 2 helical transmembrane spans lie at 46-64 (FGVRFMPAVAVFTLTWQIA) and 70-90 (GPAVATAIFACSLPMQGLWWL).

The protein belongs to the UPF0208 family.

Its subcellular location is the cell inner membrane. In Sodalis glossinidius (strain morsitans), this protein is UPF0208 membrane protein SG1605.